Consider the following 237-residue polypeptide: Ribonuclease PH (237 aa).

Phosphate contacts are provided by residues Arg-86 and 124–126 (GTR).

It belongs to the RNase PH family. As to quaternary structure, homohexameric ring arranged as a trimer of dimers.

It catalyses the reaction tRNA(n+1) + phosphate = tRNA(n) + a ribonucleoside 5'-diphosphate. Phosphorolytic 3'-5' exoribonuclease that plays an important role in tRNA 3'-end maturation. Removes nucleotide residues following the 3'-CCA terminus of tRNAs; can also add nucleotides to the ends of RNA molecules by using nucleoside diphosphates as substrates, but this may not be physiologically important. Probably plays a role in initiation of 16S rRNA degradation (leading to ribosome degradation) during starvation. The polypeptide is Ribonuclease PH (Shewanella oneidensis (strain ATCC 700550 / JCM 31522 / CIP 106686 / LMG 19005 / NCIMB 14063 / MR-1)).